Consider the following 391-residue polypeptide: Chalcone synthase 2 (391 aa).

Cys164 is an active-site residue.

This sequence belongs to the thiolase-like superfamily. Chalcone/stilbene synthases family.

It carries out the reaction (E)-4-coumaroyl-CoA + 3 malonyl-CoA + 3 H(+) = 2',4,4',6'-tetrahydroxychalcone + 3 CO2 + 4 CoA. It functions in the pathway secondary metabolite biosynthesis; flavonoid biosynthesis. Functionally, the primary product of this enzyme is 4,2',4',6'-tetrahydroxychalcone (also termed naringenin-chalcone or chalcone) which can under specific conditions spontaneously isomerize into naringenin. The chain is Chalcone synthase 2 (CHS2) from Citrus sinensis (Sweet orange).